Here is a 184-residue protein sequence, read N- to C-terminus: Large ribosomal subunit protein eL18 (184 aa).

It belongs to the eukaryotic ribosomal protein eL18 family.

Its subcellular location is the cytoplasm. The chain is Large ribosomal subunit protein eL18 (RPL18) from Theileria parva (East coast fever infection agent).